The chain runs to 1980 residues: Unconventional myosin-IXb (1980 aa).

Ser-2 is modified (N-acetylserine). Positions 15 to 114 constitute a Ras-associating domain; sequence ATFHLHIYPQ…YYFLLQERNA (100 aa). Positions 146–954 constitute a Myosin motor domain; sequence ADFDDLCNLP…ERQALQERLH (809 aa). An ATP-binding site is contributed by 239-246; it reads GESGSGKT. The tract at residues 715–736 is disordered; that stretch reads GVSSPVTRSHVEELPRGANTPS. Phosphoserine occurs at positions 717 and 718. The actin-binding stretch occupies residues 845 to 856; the sequence is KAEPFFIRCIRS. The neck or regulatory domain stretch occupies residues 941-1045; the sequence is LKETERQALQ…CRGHLQRRSF (105 aa). 4 IQ domains span residues 958 to 978, 981 to 1001, 1002 to 1024, and 1025 to 1054; these read LRRI…RHFV, KHAA…RTLE, RTRA…AYHH, and QRHS…EKQK. Ser-1046 carries the post-translational modification Phosphoserine. The tail stretch occupies residues 1046–1980; that stretch reads SQMMLEKQKA…ERAVRGAAEE (935 aa). Disordered regions lie at residues 1049–1281, 1302–1380, and 1394–1449; these read MLEK…HPDT, SQSL…QGDS, and DKKP…NRKV. Residues 1097 to 1106 show a composition bias toward polar residues; that stretch reads TWMNSKSPNG. 3 positions are modified to phosphoserine: Ser-1108, Ser-1115, and Ser-1177. Composition is skewed to basic and acidic residues over residues 1129-1177 and 1186-1195; these read ESHE…RKAS and EDTKEPREDG. 6 positions are modified to phosphoserine: Ser-1220, Ser-1222, Ser-1229, Ser-1237, Ser-1243, and Ser-1247. The segment covering 1235–1247 has biased composition (low complexity); that stretch reads RVSPVLPSSSLES. Basic and acidic residues predominate over residues 1250-1265; it reads DEDKGENSTKVQDKPE. Ser-1266, Ser-1268, and Ser-1304 each carry phosphoserine. Residue Thr-1319 is modified to Phosphothreonine. Ser-1327, Ser-1329, and Ser-1337 each carry phosphoserine. A compositionally biased stretch (polar residues) spans 1327–1344; the sequence is SFSTSDVSKLSPVKTSTE. The Phorbol-ester/DAG-type zinc finger occupies 1592 to 1641; that stretch reads GHVFASYQVNIPQSCEQCLSYIWLMDKALLCSVCKMTCHKKCVHKIQSYC. Residue Ser-1649 is modified to Phosphoserine. In terms of domain architecture, Rho-GAP spans 1663-1848; it reads DSLTSDKASV…MLIKEQMRKY (186 aa). An interaction with RHOA region spans residues 1699-1704; the sequence is AANRTR. Residues 1841-1861 are a coiled coil; it reads IKEQMRKYKVKMEEINHLEAA. Ser-1886 is modified (phosphoserine). The disordered stretch occupies residues 1891–1923; sequence VRTKSPRTPVVQDLEELGALPEEAAGGDEDREK. Positions 1918–1948 form a coiled coil; it reads DEDREKEILMERIQSIKEEKEDITYRLPELD. Phosphoserine occurs at positions 1932, 1952, and 1959. Positions 1937–1953 are enriched in basic and acidic residues; it reads KEDITYRLPELDPRGSD. The segment at 1937 to 1980 is disordered; sequence KEDITYRLPELDPRGSDEENLDSETSASTESLLEERAVRGAAEE. Thr-1965 carries the phosphothreonine modification. Residues 1969–1980 are compositionally biased toward basic and acidic residues; sequence LEERAVRGAAEE.

The protein belongs to the TRAFAC class myosin-kinesin ATPase superfamily. Myosin family. As to quaternary structure, interacts (via IQ domains) with CALM. Interacts with RHOA. Interacts (via Rho-GAP domain) with ROBO1; this inhibits the interaction with RHOA and the stimulation of RHOA GTPase activity, and thereby increases the levels of active RHOA. As to expression, expressed in testis, lung, thymus, brain, liver, spleen and heart muscle. Detected in lung, testis, spleen and liver, and at reduced level in different brain regions (at protein level).

Its subcellular location is the cytoplasm. The protein resides in the cell cortex. It is found in the perinuclear region. The protein localises to the cytoskeleton. Myosins are actin-based motor molecules with ATPase activity. Unconventional myosins serve in intracellular movements. Binds actin with high affinity both in the absence and presence of ATP and its mechanochemical activity is inhibited by calcium ions. Also acts as a GTPase activator for RHOA. Plays a role in the regulation of cell migration via its role as RHOA GTPase activator. This is regulated by its interaction with the SLIT2 receptor ROBO1; interaction with ROBO1 impairs interaction with RHOA and subsequent activation of RHOA GTPase activity, and thereby leads to increased levels of active, GTP-bound RHOA. In Rattus norvegicus (Rat), this protein is Unconventional myosin-IXb (Myo9b).